The sequence spans 230 residues: DNA repair protein rdl1 (230 aa).

Interacts with rlp1 and sws1.

It localises to the cytoplasm. The protein resides in the nucleus. Its function is as follows. Involved in homologous recombination where it functions at an early stage of recombination in a pre-recombinogenic complex with rlp1 and sws1. Also has a role at a later stage of recombination in association with the rhp55-rhp57 complex. The sequence is that of DNA repair protein rdl1 (rdl1) from Schizosaccharomyces pombe (strain 972 / ATCC 24843) (Fission yeast).